We begin with the raw amino-acid sequence, 330 residues long: Methionyl-tRNA formyltransferase (330 aa).

Residue 117–120 (SLLP) participates in (6S)-5,6,7,8-tetrahydrofolate binding.

This sequence belongs to the Fmt family.

It carries out the reaction L-methionyl-tRNA(fMet) + (6R)-10-formyltetrahydrofolate = N-formyl-L-methionyl-tRNA(fMet) + (6S)-5,6,7,8-tetrahydrofolate + H(+). Attaches a formyl group to the free amino group of methionyl-tRNA(fMet). The formyl group appears to play a dual role in the initiator identity of N-formylmethionyl-tRNA by promoting its recognition by IF2 and preventing the misappropriation of this tRNA by the elongation apparatus. This is Methionyl-tRNA formyltransferase from Verminephrobacter eiseniae (strain EF01-2).